The following is a 191-amino-acid chain: MPGSEDLRKGKDQMHSHRKRTMFTKKQLEDLNILFNENPYPNPSLQKEMASKIDIHPTVLQVWFKNHRAKLKKAKCKHIHQKQETPQPPIPEGGVSTSVGLRNADTLPRLPNAAHPIGLVYTGHRVPSFQLILYPNLKVPANDFIGHRIVHFGCCRDPNIYCLYPILESQVCAPSFHSGSPACSSNQSRER.

The segment covering 1 to 15 has biased composition (basic and acidic residues); that stretch reads MPGSEDLRKGKDQMH. The interval 1-20 is disordered; that stretch reads MPGSEDLRKGKDQMHSHRKR. The segment at residues 16 to 75 is a DNA-binding region (homeobox); sequence SHRKRTMFTKKQLEDLNILFNENPYPNPSLQKEMASKIDIHPTVLQVWFKNHRAKLKKAK.

Belongs to the paired homeobox family.

It is found in the nucleus. Functionally, transcription factor that acts as a repressor. The sequence is that of Divergent paired-related homeobox from Homo sapiens (Human).